Here is a 354-residue protein sequence, read N- to C-terminus: Probable L-ascorbate-6-phosphate lactonase UlaG (354 aa).

The protein belongs to the UlaG family. Requires a divalent metal cation as cofactor.

It is found in the cytoplasm. The catalysed reaction is L-ascorbate 6-phosphate + H2O = 3-dehydro-L-gulonate 6-phosphate. Its pathway is cofactor degradation; L-ascorbate degradation; D-xylulose 5-phosphate from L-ascorbate: step 1/4. Probably catalyzes the hydrolysis of L-ascorbate-6-P into 3-keto-L-gulonate-6-P. Is essential for L-ascorbate utilization under anaerobic conditions. This chain is Probable L-ascorbate-6-phosphate lactonase UlaG, found in Salmonella choleraesuis (strain SC-B67).